The primary structure comprises 317 residues: Beta-ketoacyl-[acyl-carrier-protein] synthase III (317 aa).

Active-site residues include Cys-112 and His-244. Positions 245-249 are ACP-binding; that stretch reads QANLR. Asn-274 is a catalytic residue.

Belongs to the thiolase-like superfamily. FabH family. As to quaternary structure, homodimer.

It localises to the cytoplasm. It carries out the reaction malonyl-[ACP] + acetyl-CoA + H(+) = 3-oxobutanoyl-[ACP] + CO2 + CoA. It functions in the pathway lipid metabolism; fatty acid biosynthesis. In terms of biological role, catalyzes the condensation reaction of fatty acid synthesis by the addition to an acyl acceptor of two carbons from malonyl-ACP. Catalyzes the first condensation reaction which initiates fatty acid synthesis and may therefore play a role in governing the total rate of fatty acid production. Possesses both acetoacetyl-ACP synthase and acetyl transacylase activities. Its substrate specificity determines the biosynthesis of branched-chain and/or straight-chain of fatty acids. The chain is Beta-ketoacyl-[acyl-carrier-protein] synthase III from Baumannia cicadellinicola subsp. Homalodisca coagulata.